The primary structure comprises 431 residues: Glucose-1-phosphate adenylyltransferase (431 aa).

Beta-D-fructose 1,6-bisphosphate is bound at residue lysine 39. 3 residues coordinate AMP: arginine 40, histidine 46, and arginine 52. Tyrosine 114 is an alpha-D-glucose 1-phosphate binding site. Arginine 130 is a binding site for AMP. Alpha-D-glucose 1-phosphate contacts are provided by residues glycine 179, glutamate 194–lysine 195, and serine 212. Glutamate 370 and arginine 386 together coordinate AMP. Beta-D-fructose 1,6-bisphosphate-binding positions include arginine 419 to arginine 423 and glutamine 429 to arginine 431.

It belongs to the bacterial/plant glucose-1-phosphate adenylyltransferase family. Homotetramer.

The catalysed reaction is alpha-D-glucose 1-phosphate + ATP + H(+) = ADP-alpha-D-glucose + diphosphate. It participates in glycan biosynthesis; glycogen biosynthesis. Allosterically activated by fructose-1,6-bisphosphate (F16BP) and inhibited by AMP. Its function is as follows. Involved in the biosynthesis of ADP-glucose, a building block required for the elongation reactions to produce glycogen. Catalyzes the reaction between ATP and alpha-D-glucose 1-phosphate (G1P) to produce pyrophosphate and ADP-Glc. The polypeptide is Glucose-1-phosphate adenylyltransferase (Salmonella paratyphi A (strain ATCC 9150 / SARB42)).